A 216-amino-acid polypeptide reads, in one-letter code: Uracil phosphoribosyltransferase (216 aa).

5-phospho-alpha-D-ribose 1-diphosphate-binding positions include Arg85, Arg110, and 135–143 (DPMVATGYS). Residues Ile200 and 205-207 (GDA) each bind uracil. Asp206 contributes to the 5-phospho-alpha-D-ribose 1-diphosphate binding site.

The protein belongs to the UPRTase family. Mg(2+) serves as cofactor.

The catalysed reaction is UMP + diphosphate = 5-phospho-alpha-D-ribose 1-diphosphate + uracil. It participates in pyrimidine metabolism; UMP biosynthesis via salvage pathway; UMP from uracil: step 1/1. Allosterically activated by GTP. In terms of biological role, catalyzes the conversion of uracil and 5-phospho-alpha-D-ribose 1-diphosphate (PRPP) to UMP and diphosphate. The polypeptide is Uracil phosphoribosyltransferase (Burkholderia ambifaria (strain ATCC BAA-244 / DSM 16087 / CCUG 44356 / LMG 19182 / AMMD) (Burkholderia cepacia (strain AMMD))).